Here is a 125-residue protein sequence, read N- to C-terminus: MKEQTEIGKIKEGRYIVIDEEPCKVVGLATSKPGKHGAAKARIDAVGIFDGVKRSIVSPVSAKTYVPVVERKSGQVISIAGDMAQLMDMKDYSNFEIAIPEDKKGTLEVGKEIMYIESMGKRKLD.

Lys-35 is modified (hypusine).

The protein belongs to the eIF-5A family.

It localises to the cytoplasm. Its function is as follows. Functions by promoting the formation of the first peptide bond. In Methanoregula boonei (strain DSM 21154 / JCM 14090 / 6A8), this protein is Translation initiation factor 5A (eIF5A).